A 345-amino-acid chain; its full sequence is Probable galacturonosyltransferase-like 3 (345 aa).

The Cytoplasmic segment spans residues 1–7 (MSSLRLR). Residues 8 to 28 (LCLLLLLPITISCVTVTLTDL) traverse the membrane as a helical; Signal-anchor for type II membrane protein segment. At 29 to 345 (PAFREAPAFR…FRYSPLISDS (317 aa)) the chain is on the lumenal side. N-linked (GlcNAc...) asparagine glycosylation occurs at asparagine 197.

Belongs to the glycosyltransferase 8 family.

It localises to the golgi apparatus membrane. It participates in glycan metabolism; pectin biosynthesis. Functionally, may be involved in pectin and/or xylans biosynthesis in cell walls. This Arabidopsis thaliana (Mouse-ear cress) protein is Probable galacturonosyltransferase-like 3 (GATL3).